Reading from the N-terminus, the 463-residue chain is MAALRALCRLRGAAAQVLRPGAGVRLPIQPSRGARQWQPDVEWAEQYGGAVMYPTKETAHWKPPPWNDVDPPKDTLVSNLTLNFGPQHPAAHGVLRLVMELSGEMVRKCDPHIGLLHRGTEKLIEYKTYLQALPYFDRLDYVSMMCNEQAYSLAVEKLLNIQPPPRAQWIRVLFGEITRLLNHIMAVTTHALDIGAMTPFFWMFEEREKMFEFYERVSGARMHAAYVRPGGVHQDLPLGLMDDIYEFSKNFSLRIDELEEMLTNNRIWRNRTVDIGIVTAEDALNYGFSGVMLRGSGIQWDLRKTQPYDVYDQVEFDVPIGSRGDCYDRYLCRVEEMRQSIRIISQCLNKMPPGEIKVDDAKVSPPKRAEMKTSMESLIHHFKLYTEGYQVPPGATYTAIEAPKGEFGVYLVSDGSSRPYRCKIKAPGFAHLAGLDKMSKGHMLADVVAIIGTQDIVFGEVDR.

A mitochondrion-targeting transit peptide spans 1 to 33 (MAALRALCRLRGAAAQVLRPGAGVRLPIQPSRG). The residue at position 62 (K62) is an N6-acetyllysine. Residue R118 is modified to Symmetric dimethylarginine. [4Fe-4S] cluster contacts are provided by C326, C332, and C347.

Belongs to the complex I 49 kDa subunit family. In terms of assembly, core subunit of respiratory chain NADH dehydrogenase (Complex I) which is composed of 45 different subunits. Component of the iron-sulfur (IP) fragment of the enzyme. Interacts with NDUFAF3. Interacts with NDUFAF7. Interacts with CERS2. It depends on [4Fe-4S] cluster as a cofactor. Dimethylation at Arg-118 by NDUFAF7 takes place after NDUFS2 assembles into the complex I, leading to stabilize the early intermediate complex.

It is found in the mitochondrion inner membrane. It carries out the reaction a ubiquinone + NADH + 5 H(+)(in) = a ubiquinol + NAD(+) + 4 H(+)(out). Functionally, core subunit of the mitochondrial membrane respiratory chain NADH dehydrogenase (Complex I) which catalyzes electron transfer from NADH through the respiratory chain, using ubiquinone as an electron acceptor. Essential for the catalytic activity and assembly of complex I. Redox-sensitive, critical component of the oxygen-sensing pathway in the pulmonary vasculature which plays a key role in acute pulmonary oxygen-sensing and hypoxic pulmonary vasoconstriction. Plays an important role in carotid body sensing of hypoxia. Essential for glia-like neural stem and progenitor cell proliferation, differentiation and subsequent oligodendrocyte or neuronal maturation. This chain is NADH dehydrogenase [ubiquinone] iron-sulfur protein 2, mitochondrial (NDUFS2), found in Bos taurus (Bovine).